A 394-amino-acid chain; its full sequence is Phosphopentomutase (394 aa).

Mn(2+)-binding residues include aspartate 14, aspartate 287, histidine 292, aspartate 328, histidine 329, and histidine 340.

The protein belongs to the phosphopentomutase family. Mn(2+) is required as a cofactor.

It localises to the cytoplasm. It catalyses the reaction 2-deoxy-alpha-D-ribose 1-phosphate = 2-deoxy-D-ribose 5-phosphate. The enzyme catalyses alpha-D-ribose 1-phosphate = D-ribose 5-phosphate. The protein operates within carbohydrate degradation; 2-deoxy-D-ribose 1-phosphate degradation; D-glyceraldehyde 3-phosphate and acetaldehyde from 2-deoxy-alpha-D-ribose 1-phosphate: step 1/2. Functionally, isomerase that catalyzes the conversion of deoxy-ribose 1-phosphate (dRib-1-P) and ribose 1-phosphate (Rib-1-P) to deoxy-ribose 5-phosphate (dRib-5-P) and ribose 5-phosphate (Rib-5-P), respectively. This chain is Phosphopentomutase, found in Listeria welshimeri serovar 6b (strain ATCC 35897 / DSM 20650 / CCUG 15529 / CIP 8149 / NCTC 11857 / SLCC 5334 / V8).